Consider the following 746-residue polypeptide: Iron-sulfur clusters transporter ABCB7, mitochondrial (746 aa).

A mitochondrion-targeting transit peptide spans 1-19; the sequence is MAPMLVSLNCGIRVQRRTL. The Mitochondrial matrix segment spans residues 20-133; it reads TLLIRQTSSY…KDRPDLRARV (114 aa). The ABC transmembrane type-1 domain occupies 133-429; sequence VAVSLGLLAG…LGTVYRETRQ (297 aa). A helical membrane pass occupies residues 134 to 154; the sequence is AVSLGLLAGAKLTNVMVPFMF. Topologically, residues 155 to 176 are mitochondrial intermembrane; sequence KYAVDELNQMSGHMLNLNDAPS. Residues 177-199 traverse the membrane as a helical segment; that stretch reads TVATMTTAVLIGYGVSRAGSALF. The Mitochondrial matrix portion of the chain corresponds to 200-252; it reads NELRNTVFGKVAQSSIRRIAKNVFLHLHNLDLGFHLSRQTGALSKAIDRGTRG. Residues 253–273 form a helical membrane-spanning segment; that stretch reads ISFVLSALVFNLGPTVFEMFL. At 274 to 283 the chain is on the mitochondrial intermembrane side; that stretch reads VSAILYYKCG. Residues 284 to 304 traverse the membrane as a helical segment; it reads GEFAAVALGTLSAYTIFTILV. Residues 305–375 lie on the Mitochondrial matrix side of the membrane; that stretch reads TQWRTRFRIE…TLAMLNFGQS (71 aa). Residues 308–312 and 371–374 each bind glutathione; these read RTRFR and NFGQ. The helical transmembrane segment at 376–396 threads the bilayer; that stretch reads AIFSVGLTAIMLLASKGIAAG. At 397-402 the chain is on the mitochondrial intermembrane side; the sequence is NMTVGD. The chain crosses the membrane as a helical span at residues 403–423; sequence LVMVNGLLFQLSLPLNFLGTV. Glycine 421 is a glutathione binding site. Topologically, residues 424–746 are mitochondrial matrix; that stretch reads YRETRQALID…SVKGCGNCSC (323 aa). One can recognise an ABC transporter domain in the interval 465-699; the sequence is IRFEDVYFEY…PGSLYAELWN (235 aa). ATP-binding positions include tyrosine 474 and 498-505; that span reads GGSGSGKS. The interval 708–728 is disordered; that stretch reads SRKSSSAPAAERLSQKEEERK.

Belongs to the ABC transporter superfamily. ABCB family. Heavy Metal importer (TC 3.A.1.210) subfamily. Homodimer.

It localises to the mitochondrion inner membrane. The protein localises to the mitochondrion. It catalyses the reaction (glutathione)4[2Fe(III)-2S] cluster(in) + ATP + H2O = (glutathione)4[2Fe(III)-2S] cluster(out) + ADP + phosphate + H(+). Functionally, exports glutathione-coordinated iron-sulfur clusters such as [2Fe-2S]-(GS)4 cluster from the mitochondria to the cytosol in an ATP-dependent manner allowing the assembly of the cytosolic iron-sulfur (Fe/S) cluster-containing proteins and participates in iron homeostasis. May play a role in iron and lipid metabolism. This chain is Iron-sulfur clusters transporter ABCB7, mitochondrial, found in Oryzias latipes (Japanese rice fish).